The chain runs to 171 residues: Shikimate kinase (171 aa).

G13 to T18 is an ATP binding site. S17 serves as a coordination point for Mg(2+). 3 residues coordinate substrate: D35, R59, and G81. R118 is a binding site for ATP. R136 serves as a coordination point for substrate. R153 contacts ATP.

This sequence belongs to the shikimate kinase family. As to quaternary structure, monomer. Requires Mg(2+) as cofactor.

The protein resides in the cytoplasm. The enzyme catalyses shikimate + ATP = 3-phosphoshikimate + ADP + H(+). The protein operates within metabolic intermediate biosynthesis; chorismate biosynthesis; chorismate from D-erythrose 4-phosphate and phosphoenolpyruvate: step 5/7. Catalyzes the specific phosphorylation of the 3-hydroxyl group of shikimic acid using ATP as a cosubstrate. The polypeptide is Shikimate kinase (Streptomyces coelicolor (strain ATCC BAA-471 / A3(2) / M145)).